A 585-amino-acid chain; its full sequence is Arginine--tRNA ligase (585 aa).

The 'HIGH' region signature appears at alanine 131 to histidine 141.

It belongs to the class-I aminoacyl-tRNA synthetase family. In terms of assembly, monomer.

The protein resides in the cytoplasm. The catalysed reaction is tRNA(Arg) + L-arginine + ATP = L-arginyl-tRNA(Arg) + AMP + diphosphate. The chain is Arginine--tRNA ligase from Rhizobium meliloti (strain 1021) (Ensifer meliloti).